We begin with the raw amino-acid sequence, 31 residues long: Photosystem II reaction center protein T (31 aa).

The chain crosses the membrane as a helical span at residues 3 to 23 (SFAYVLILTLAIATLFFAIAF).

Belongs to the PsbT family. As to quaternary structure, PSII is composed of 1 copy each of membrane proteins PsbA, PsbB, PsbC, PsbD, PsbE, PsbF, PsbH, PsbI, PsbJ, PsbK, PsbL, PsbM, PsbT, PsbX, PsbY, PsbZ, Psb30/Ycf12, peripheral proteins PsbO, CyanoQ (PsbQ), PsbU, PsbV and a large number of cofactors. It forms dimeric complexes.

The protein localises to the cellular thylakoid membrane. In terms of biological role, found at the monomer-monomer interface of the photosystem II (PS II) dimer, plays a role in assembly and dimerization of PSII. PSII is a light-driven water plastoquinone oxidoreductase, using light energy to abstract electrons from H(2)O, generating a proton gradient subsequently used for ATP formation. The chain is Photosystem II reaction center protein T from Parasynechococcus marenigrum (strain WH8102).